Here is a 331-residue protein sequence, read N- to C-terminus: DSC E3 ubiquitin ligase complex subunit D (331 aa).

N-linked (GlcNAc...) asparagine glycosylation occurs at Asn26. The next 3 membrane-spanning stretches (helical) occupy residues 63–83, 107–127, and 159–179; these read ILIY…ILFA, PFIG…NFFT, and LFLL…LIVE. The span at 197–214 shows a compositional bias: basic and acidic residues; that stretch reads VQDHDSEERGVHRTRPES. Positions 197 to 225 are disordered; it reads VQDHDSEERGVHRTRPESRSSVVGAELDE.

As to quaternary structure, component of the DSC E3 ubiquitin ligase complex composed of dscA, dscB, dscC and dscD.

It is found in the endoplasmic reticulum membrane. It participates in protein modification; protein ubiquitination. Component of the DSC E3 ubiquitin ligase complex which is required for the srbA transcriptional activator proteolytic cleavage to release the soluble transcription factor from the membrane in low oxygen or sterol conditions. Required for growth during hypoxia and triazole drug susceptibility, as well as for virulence in a murine model of invasive pulmonary aspergillosis (IPA). The chain is DSC E3 ubiquitin ligase complex subunit D from Aspergillus fumigatus (strain CBS 144.89 / FGSC A1163 / CEA10) (Neosartorya fumigata).